The primary structure comprises 199 residues: uncharacterized protein (199 aa).

Residues 17–37 (AGAVTLGIGFFALASALWFLI) traverse the membrane as a helical segment.

The protein localises to the membrane. This is an uncharacterized protein from Homo sapiens (Human).